The chain runs to 177 residues: Ubiquinol-cytochrome c reductase iron-sulfur subunit (177 aa).

Residues 18 to 38 (IVLTASSVAAVGAACAFWPII) form a helical membrane-spanning segment. A Rieske domain is found at 88–175 (ARAVKMSELI…YIFISDKKIR (88 aa)). Residues Cys120, His122, Cys139, and His142 each contribute to the [2Fe-2S] cluster site. Cys125 and Cys141 are joined by a disulfide.

Belongs to the Rieske iron-sulfur protein family. The main subunits of complex b-c1 are: cytochrome b, cytochrome c1 and the Rieske protein. [2Fe-2S] cluster serves as cofactor.

Its subcellular location is the cell membrane. It catalyses the reaction a quinol + 2 Fe(III)-[cytochrome c](out) = a quinone + 2 Fe(II)-[cytochrome c](out) + 2 H(+)(out). Its function is as follows. Component of the ubiquinol-cytochrome c reductase complex (complex III or cytochrome b-c1 complex), which is a respiratory chain that generates an electrochemical potential coupled to ATP synthesis. This chain is Ubiquinol-cytochrome c reductase iron-sulfur subunit (petA), found in Rickettsia prowazekii (strain Madrid E).